The chain runs to 432 residues: 5-methylthioadenosine/S-adenosylhomocysteine deaminase (432 aa).

Positions 62 and 64 each coordinate Zn(2+). Glu91 and His184 together coordinate substrate. His211 is a Zn(2+) binding site. Substrate-binding residues include Glu214 and Asp299. Asp299 is a Zn(2+) binding site.

This sequence belongs to the metallo-dependent hydrolases superfamily. MTA/SAH deaminase family. It depends on Zn(2+) as a cofactor.

It catalyses the reaction S-adenosyl-L-homocysteine + H2O + H(+) = S-inosyl-L-homocysteine + NH4(+). It carries out the reaction S-methyl-5'-thioadenosine + H2O + H(+) = S-methyl-5'-thioinosine + NH4(+). Functionally, catalyzes the deamination of 5-methylthioadenosine and S-adenosyl-L-homocysteine into 5-methylthioinosine and S-inosyl-L-homocysteine, respectively. Is also able to deaminate adenosine. This is 5-methylthioadenosine/S-adenosylhomocysteine deaminase from Haloarcula marismortui (strain ATCC 43049 / DSM 3752 / JCM 8966 / VKM B-1809) (Halobacterium marismortui).